We begin with the raw amino-acid sequence, 681 residues long: DNA ligase (681 aa).

Residues 32–36, 81–82, and Glu113 contribute to the NAD(+) site; these read DIEYD and SL. Residue Lys115 is the N6-AMP-lysine intermediate of the active site. Residues Arg136, Glu173, Lys290, and Lys314 each coordinate NAD(+). Zn(2+)-binding residues include Cys408, Cys411, Cys426, and Cys432. The region spanning 596–681 is the BRCT domain; the sequence is EIDSPFAGKT…LNNHGDVSTL (86 aa).

This sequence belongs to the NAD-dependent DNA ligase family. LigA subfamily. Mg(2+) is required as a cofactor. It depends on Mn(2+) as a cofactor.

It catalyses the reaction NAD(+) + (deoxyribonucleotide)n-3'-hydroxyl + 5'-phospho-(deoxyribonucleotide)m = (deoxyribonucleotide)n+m + AMP + beta-nicotinamide D-nucleotide.. In terms of biological role, DNA ligase that catalyzes the formation of phosphodiester linkages between 5'-phosphoryl and 3'-hydroxyl groups in double-stranded DNA using NAD as a coenzyme and as the energy source for the reaction. It is essential for DNA replication and repair of damaged DNA. The chain is DNA ligase from Pectobacterium atrosepticum (strain SCRI 1043 / ATCC BAA-672) (Erwinia carotovora subsp. atroseptica).